The following is a 730-amino-acid chain: Pentatricopeptide repeat-containing protein At5g64320, mitochondrial (730 aa).

Residues 1 to 18 constitute a mitochondrion transit peptide; sequence MVMLARSKLALDVSRRSQ. PPR repeat units lie at residues 110-144, 145-175, 181-215, 216-250, 251-285, 286-320, 321-351, 352-387, 388-422, 423-457, 458-492, 493-527, 528-562, 563-597, 598-632, 633-667, and 668-702; these read SFDV…GIVF, KESL…MRNV, TFKS…KIPP, TLFT…GCVP, NSVI…GCVP, DAET…GFAP, DDIT…IPKP, EIVI…GIVP, DVCT…GCKP, NVYS…GLKP, NTVG…GCKP, DVYT…GVVA, NTVT…GSPL, DEIT…GHAP, SNIS…GSTP, DIVT…GIPP, and DTVT…GFVP.

Belongs to the PPR family. P subfamily.

It is found in the mitochondrion. The polypeptide is Pentatricopeptide repeat-containing protein At5g64320, mitochondrial (Arabidopsis thaliana (Mouse-ear cress)).